The sequence spans 127 residues: MORF4 family-associated protein 1-like 1 (127 aa).

Positions 87–118 (GEADERVSELCEKAEEKAKEIAKMAEMLVELV) form a coiled coil.

The protein belongs to the MORF4 family-associated protein family.

The polypeptide is MORF4 family-associated protein 1-like 1 (MRFAP1L1) (Homo sapiens (Human)).